The following is a 225-amino-acid chain: Ribonuclease HII (225 aa).

Positions 35-225 (GLVAGVDEVG…SFRPCQISLD (191 aa)) constitute an RNase H type-2 domain. A divalent metal cation contacts are provided by aspartate 41, glutamate 42, and aspartate 137.

This sequence belongs to the RNase HII family. Requires Mn(2+) as cofactor. Mg(2+) serves as cofactor.

It localises to the cytoplasm. The catalysed reaction is Endonucleolytic cleavage to 5'-phosphomonoester.. Functionally, endonuclease that specifically degrades the RNA of RNA-DNA hybrids. In Trichormus variabilis (strain ATCC 29413 / PCC 7937) (Anabaena variabilis), this protein is Ribonuclease HII.